A 261-amino-acid polypeptide reads, in one-letter code: Ribonuclease HII (261 aa).

The 189-residue stretch at 71–259 (KYIAGVDEVG…VKEAKLHFDS (189 aa)) folds into the RNase H type-2 domain. 3 residues coordinate a divalent metal cation: Asp77, Glu78, and Asp169.

Belongs to the RNase HII family. The cofactor is Mn(2+). Mg(2+) serves as cofactor.

The protein localises to the cytoplasm. It catalyses the reaction Endonucleolytic cleavage to 5'-phosphomonoester.. Functionally, endonuclease that specifically degrades the RNA of RNA-DNA hybrids. In Listeria monocytogenes serotype 4b (strain F2365), this protein is Ribonuclease HII.